Consider the following 433-residue polypeptide: 23S rRNA (uracil(1939)-C(5))-methyltransferase RlmD (433 aa).

In terms of domain architecture, TRAM spans 10 to 68; that stretch reads RTTTRQIITVSVNDLDSFGQGVARHNGKTLFIPGLLPQENAEVTVTEDKKQYARAKVVR. Positions 81, 87, 90, and 162 each coordinate [4Fe-4S] cluster. S-adenosyl-L-methionine is bound by residues Gln-265, Phe-294, Asn-299, Glu-315, Asn-342, and Asp-363. Cys-389 acts as the Nucleophile in catalysis.

The protein belongs to the class I-like SAM-binding methyltransferase superfamily. RNA M5U methyltransferase family. RlmD subfamily.

It catalyses the reaction uridine(1939) in 23S rRNA + S-adenosyl-L-methionine = 5-methyluridine(1939) in 23S rRNA + S-adenosyl-L-homocysteine + H(+). Functionally, catalyzes the formation of 5-methyl-uridine at position 1939 (m5U1939) in 23S rRNA. This is 23S rRNA (uracil(1939)-C(5))-methyltransferase RlmD from Escherichia coli O6:K15:H31 (strain 536 / UPEC).